We begin with the raw amino-acid sequence, 463 residues long: T-box transcription factor TBX1-A (463 aa).

2 disordered regions span residues 39–58 and 75–104; these read SPSPGDPYSQHEPHYEPCSA and GASSSSCASSTPGSGSTGSSSSNKAPVKKN. Residues 75-96 are compositionally biased toward low complexity; sequence GASSSSCASSTPGSGSTGSSSS. Positions 119–297 form a DNA-binding region, T-box; that stretch reads LWDEFNQLGT…SNPFAKGFRD (179 aa). Disordered regions lie at residues 320-354 and 377-409; these read RSRNPVSSPTQNGSDKDGDGRREYERDASGTPLHG and VPLSTGRPSPPHELRLDPHSQGSEPLHHHPYKY. A compositionally biased stretch (polar residues) spans 323–332; it reads NPVSSPTQNG. Positions 333–347 are enriched in basic and acidic residues; it reads SDKDGDGRREYERDA. The short motif at 420 to 431 is the Nuclear localization signal element; that stretch reads KTRPAPYPLPTI.

In terms of assembly, binds DNA as a dimer. Interacts with dscr6/ripply3.

The protein localises to the nucleus. In terms of biological role, probable transcriptional regulator involved in developmental processes. Binds to the palindromic T site 5'-TTCACACCTAGGTGTGAA-3' DNA sequence. Induces pre-placodal ectoderm (PPE) gene expression in regions where RIPPLY3 is absent. Plays a role in the formation of the anteroposterior (AP) axis during embryonic development; required to establish the posterolateral border of the pre-placodal ectoderm (PPE) acting downstream of the retinoic acid receptor (RAR) signaling. The sequence is that of T-box transcription factor TBX1-A (tbx1-a) from Xenopus laevis (African clawed frog).